A 232-amino-acid chain; its full sequence is MASFLKKTMPFKTTIEGTVNGHYFKCTGKGEGNPFEGTQEMKIEVIEGGPLPFAFHILSTSCMYGSKTFIKYVSGIPDYFKQSFPEGFTWERTTTYEDGGFLTAHQDTSLDGDCLVYKVKILGNNFPADGPVMQNKAGRWEPATEIVYEVDGVLRGQSLMALKCPGGRHLTCHLHTTYRSKKPASALKMPGFHFEDHRIEIMEEVEKGKCYKQYEAAVGRYCDAAPSKLGHN.

Positions 63–65 (MYG) form a cross-link, 2-iminomethyl-5-imidazolinone (Met-Gly). Tyrosine 64 is modified ((E)-2,3-didehydrotyrosine).

Belongs to the GFP family. In terms of processing, contains a chromophore consisting of modified amino acid residues. The chromophore is formed by autocatalytic backbone condensation between Xaa-N and Gly-(N+2), oxidation of Tyr-(N+1) to didehydrotyrosine, and formation of a double bond to the alpha-amino nitrogen of residue Tyr-(N+1). Maturation of the chromophore requires nothing other than molecular oxygen. In terms of tissue distribution, tentacle tips.

Its function is as follows. Pigment protein that is intensely purple in color. The chain is GFP-like non-fluorescent chromoprotein FP595 from Anemonia sulcata (Mediterranean snakelocks sea anemone).